The primary structure comprises 100 residues: Urease subunit gamma (100 aa).

This sequence belongs to the urease gamma subunit family. As to quaternary structure, heterotrimer of UreA (gamma), UreB (beta) and UreC (alpha) subunits. Three heterotrimers associate to form the active enzyme.

It is found in the cytoplasm. The enzyme catalyses urea + 2 H2O + H(+) = hydrogencarbonate + 2 NH4(+). Its pathway is nitrogen metabolism; urea degradation; CO(2) and NH(3) from urea (urease route): step 1/1. This is Urease subunit gamma from Polaromonas naphthalenivorans (strain CJ2).